The following is a 626-amino-acid chain: Endoglucanase 19 (626 aa).

The signal sequence occupies residues 1–23 (MGSRTTISILVVLLLGLVQLAIS). Asp-79 (nucleophile) is an active-site residue. Residues His-412, Asp-464, and Glu-473 contribute to the active site. The segment at 515–536 (APVPQRKPTKPPAASSPSPITI) is disordered. The span at 526–536 (PAASSPSPITI) shows a compositional bias: low complexity. N-linked (GlcNAc...) asparagine glycans are attached at residues Asn-560 and Asn-622.

It belongs to the glycosyl hydrolase 9 (cellulase E) family.

It is found in the secreted. It catalyses the reaction Endohydrolysis of (1-&gt;4)-beta-D-glucosidic linkages in cellulose, lichenin and cereal beta-D-glucans.. This Arabidopsis thaliana (Mouse-ear cress) protein is Endoglucanase 19.